The following is a 136-amino-acid chain: Histone H3 (136 aa).

The disordered stretch occupies residues 1–43; it reads MARTKQTARKNVGGKAPRKHIGQKSARKTASTTAGMKKPHRYR. An N6-methylated lysine modification is found at K10. An N6-acetyllysine mark is found at K15 and K24. Over residues 16 to 27 the composition is skewed to basic residues; that stretch reads APRKHIGQKSAR. Residues K28 and K37 each carry the N6-methylated lysine modification.

Belongs to the histone H3 family. As to quaternary structure, the nucleosome is a histone octamer containing two molecules each of H2A, H2B, H3 and H4 assembled in one H3-H4 heterotetramer and two H2A-H2B heterodimers. The octamer wraps approximately 147 bp of DNA.

The protein resides in the nucleus. The protein localises to the chromosome. Functionally, core component of nucleosome. Nucleosomes wrap and compact DNA into chromatin, limiting DNA accessibility to the cellular machineries which require DNA as a template. Histones thereby play a central role in transcription regulation, DNA repair, DNA replication and chromosomal stability. DNA accessibility is regulated via a complex set of post-translational modifications of histones, also called histone code, and nucleosome remodeling. This Euplotes crassus protein is Histone H3.